A 512-amino-acid chain; its full sequence is NAD(P) transhydrogenase subunit alpha (512 aa).

Residues 1–400 are Cytoplasmic-facing; that stretch reads MLIGVPRELL…KESKPTDPRV (400 aa). NAD(+) is bound by residues 125–128, valine 175, 195–197, and glycine 225; these read QALD and DSR. The disordered stretch occupies residues 375–394; that stretch reads SAQPKQETKAAPVAEKKESK. A run of 2 helical transmembrane segments spans residues 401–421 and 422–442; these read KYGV…VAPA and AFLS…YVVW. Topologically, residues 443–451 are cytoplasmic; it reads NVSHALHTP. The helical transmembrane segment at 452-472 threads the bilayer; it reads LMAVTNAISGIIIVGALLQIR. The Periplasmic segment spans residues 473-478; the sequence is QPTGNL. Residues 479-499 traverse the membrane as a helical segment; the sequence is FIDALAFVAILVASINIFGGF. At 500–512 the chain is on the cytoplasmic side; the sequence is RVTQRMLAMFRKG.

It belongs to the AlaDH/PNT family. Heterodimer of an alpha (PntA) and a beta (PntB) chain.

It is found in the cell inner membrane. The catalysed reaction is NAD(+) + NADPH + H(+)(in) = NADH + NADP(+) + H(+)(out). Functionally, the transhydrogenation between NADH and NADP is coupled to respiration and ATP hydrolysis and functions as a proton pump across the membrane. This is NAD(P) transhydrogenase subunit alpha (pntA) from Haemophilus influenzae (strain ATCC 51907 / DSM 11121 / KW20 / Rd).